An 83-amino-acid polypeptide reads, in one-letter code: MAITKKNLIAFVFTILFVISYVHCRSTSDIVSGSGIKEDEHVCFKTSPCLPEVGGEKGCIAFCSRMKFTTGLCLGSVVCCCYT.

An N-terminal signal peptide occupies residues 1–24; that stretch reads MAITKKNLIAFVFTILFVISYVHC. Disulfide bonds link Cys43/Cys81, Cys49/Cys73, Cys59/Cys79, and Cys63/Cys80.

Belongs to the DEFL family.

Its subcellular location is the secreted. The chain is Putative defensin-like protein 110 from Arabidopsis thaliana (Mouse-ear cress).